The sequence spans 67 residues: Probable tautomerase K2 (67 aa).

Pro2 serves as the catalytic Proton acceptor; via imino nitrogen.

Belongs to the 4-oxalocrotonate tautomerase family.

The sequence is that of Probable tautomerase K2 from Dickeya dadantii (strain 3937) (Erwinia chrysanthemi (strain 3937)).